A 373-amino-acid chain; its full sequence is MRENCTDYRDLFINDRPMMDARAPVEFHKGAFPGVINLPLMNDIERQKVGTCYKQHGQQAAIELGHQLVSGRTKAERIEAWASFAKANPDGYLYCFRGGLRSQIVQQWLKSEAGIDYPRVIGGYKAMRGFLLETTEQAVAECDFVLVGGMTGTGKTEVLAQLHNAVDLEAHANHRGSSFGKRASGQPAQIDFENALAIDLLKRRAAGQRQFVLEDEARLIGRCSLPLPLYQGMQHYPLVWLEDSLGDRVERILQAYVVELCAEFVAVEGAEAGFAAFAARLRESLANITRRLGGERYQRLAAIMDQALEEQARDGQVDTHRGWIEALLVEYYDPMYVFQRESKAGRIEFAGEQQAVVEYLRQRSGHFPEAPAS.

The region spanning 12–136 is the Rhodanese domain; the sequence is FINDRPMMDA…MRGFLLETTE (125 aa). Cys95 serves as the catalytic S-selanylcysteine intermediate.

The protein belongs to the SelU family. In terms of assembly, monomer.

It carries out the reaction 5-methylaminomethyl-2-thiouridine(34) in tRNA + selenophosphate + (2E)-geranyl diphosphate + H2O + H(+) = 5-methylaminomethyl-2-selenouridine(34) in tRNA + (2E)-thiogeraniol + phosphate + diphosphate. It catalyses the reaction 5-methylaminomethyl-2-thiouridine(34) in tRNA + (2E)-geranyl diphosphate = 5-methylaminomethyl-S-(2E)-geranyl-thiouridine(34) in tRNA + diphosphate. The catalysed reaction is 5-methylaminomethyl-S-(2E)-geranyl-thiouridine(34) in tRNA + selenophosphate + H(+) = 5-methylaminomethyl-2-(Se-phospho)selenouridine(34) in tRNA + (2E)-thiogeraniol. The enzyme catalyses 5-methylaminomethyl-2-(Se-phospho)selenouridine(34) in tRNA + H2O = 5-methylaminomethyl-2-selenouridine(34) in tRNA + phosphate. Involved in the post-transcriptional modification of the uridine at the wobble position (U34) of tRNA(Lys), tRNA(Glu) and tRNA(Gln). Catalyzes the conversion of 2-thiouridine (S2U-RNA) to 2-selenouridine (Se2U-RNA). Acts in a two-step process involving geranylation of 2-thiouridine (S2U) to S-geranyl-2-thiouridine (geS2U) and subsequent selenation of the latter derivative to 2-selenouridine (Se2U) in the tRNA chain. The chain is tRNA 2-selenouridine synthase from Ectopseudomonas mendocina (strain ymp) (Pseudomonas mendocina).